We begin with the raw amino-acid sequence, 311 residues long: Acetyl-coenzyme A carboxylase carboxyl transferase subunit alpha (311 aa).

One can recognise a CoA carboxyltransferase C-terminal domain in the interval 36 to 286 (ELKKEVERVY…VNYFLKSLEE (251 aa)).

Belongs to the AccA family. As to quaternary structure, acetyl-CoA carboxylase is a heterohexamer composed of biotin carboxyl carrier protein (AccB), biotin carboxylase (AccC) and two subunits each of ACCase subunit alpha (AccA) and ACCase subunit beta (AccD).

The protein resides in the cytoplasm. It catalyses the reaction N(6)-carboxybiotinyl-L-lysyl-[protein] + acetyl-CoA = N(6)-biotinyl-L-lysyl-[protein] + malonyl-CoA. The protein operates within lipid metabolism; malonyl-CoA biosynthesis; malonyl-CoA from acetyl-CoA: step 1/1. Functionally, component of the acetyl coenzyme A carboxylase (ACC) complex. First, biotin carboxylase catalyzes the carboxylation of biotin on its carrier protein (BCCP) and then the CO(2) group is transferred by the carboxyltransferase to acetyl-CoA to form malonyl-CoA. The chain is Acetyl-coenzyme A carboxylase carboxyl transferase subunit alpha from Wolinella succinogenes (strain ATCC 29543 / DSM 1740 / CCUG 13145 / JCM 31913 / LMG 7466 / NCTC 11488 / FDC 602W) (Vibrio succinogenes).